The primary structure comprises 42 residues: YAEGTFISDYSIAMDKIRQQDFVNWLLAQKGKKSDWKHNITQ.

The protein belongs to the glucagon family.

The protein localises to the secreted. Functionally, potent stimulator of insulin secretion and relatively poor inhibitor of gastric acid secretion. In Sus scrofa (Pig), this protein is Gastric inhibitory polypeptide (GIP).